The following is a 595-amino-acid chain: Phenylalanine--tRNA ligase beta subunit (595 aa).

The interval 86–90 is 3'-CCA residue in tRNA; sequence KLSKP. Positions 292–370 constitute a B5 domain; it reads FNDRIMDVSI…VGYGFNNLPK (79 aa). Residues D348, D354, E357, and D358 each contribute to the Mg(2+) site.

The protein belongs to the phenylalanyl-tRNA synthetase beta subunit family. Type 2 subfamily. As to quaternary structure, tetramer of two alpha and two beta subunits. Mg(2+) is required as a cofactor.

The protein localises to the cytoplasm. It catalyses the reaction tRNA(Phe) + L-phenylalanine + ATP = L-phenylalanyl-tRNA(Phe) + AMP + diphosphate + H(+). This is Phenylalanine--tRNA ligase beta subunit (FRS1) from Saccharomyces cerevisiae (strain ATCC 204508 / S288c) (Baker's yeast).